Here is a 158-residue protein sequence, read N- to C-terminus: MFRIGQGFDVHEFAEGRPLIIGGVTIPHEKGLIGHSDADVLLHTIADACLGAIAAGDIGKHFPDTDPAFKDADSAVLLQKVWEFVREQGYELGNLDCTIIAQKPKMAPHIESMRKRISELLETSIDNINVKATTTEKLGFTGREEGIASQAVVLLQKK.

Asp-9 and His-11 together coordinate a divalent metal cation. 4-CDP-2-C-methyl-D-erythritol 2-phosphate is bound by residues 9–11 (DVH) and 35–36 (HS). His-43 provides a ligand contact to a divalent metal cation. 4-CDP-2-C-methyl-D-erythritol 2-phosphate-binding positions include 57–59 (DIG), 62–66 (FPDTD), 101–107 (AQKPKMA), 133–136 (TTTE), Phe-140, and Arg-143.

The protein belongs to the IspF family. In terms of assembly, homotrimer. It depends on a divalent metal cation as a cofactor.

It carries out the reaction 4-CDP-2-C-methyl-D-erythritol 2-phosphate = 2-C-methyl-D-erythritol 2,4-cyclic diphosphate + CMP. It functions in the pathway isoprenoid biosynthesis; isopentenyl diphosphate biosynthesis via DXP pathway; isopentenyl diphosphate from 1-deoxy-D-xylulose 5-phosphate: step 4/6. Its function is as follows. Involved in the biosynthesis of isopentenyl diphosphate (IPP) and dimethylallyl diphosphate (DMAPP), two major building blocks of isoprenoid compounds. Catalyzes the conversion of 4-diphosphocytidyl-2-C-methyl-D-erythritol 2-phosphate (CDP-ME2P) to 2-C-methyl-D-erythritol 2,4-cyclodiphosphate (ME-CPP) with a corresponding release of cytidine 5-monophosphate (CMP). The protein is 2-C-methyl-D-erythritol 2,4-cyclodiphosphate synthase of Bacillus cereus (strain ATCC 10987 / NRS 248).